Here is a 151-residue protein sequence, read N- to C-terminus: Nucleoside diphosphate kinase (151 aa).

Positions 10, 58, 86, 92, 103, and 113 each coordinate ATP. The Pros-phosphohistidine intermediate role is filled by histidine 116.

It belongs to the NDK family. As to quaternary structure, homotetramer. Mg(2+) is required as a cofactor.

It is found in the cytoplasm. It carries out the reaction dZDP + ATP = dZTP + ADP. The catalysed reaction is a 2'-deoxyribonucleoside 5'-diphosphate + ATP = a 2'-deoxyribonucleoside 5'-triphosphate + ADP. It catalyses the reaction a ribonucleoside 5'-diphosphate + ATP = a ribonucleoside 5'-triphosphate + ADP. It functions in the pathway purine metabolism. Major role in the synthesis of nucleoside triphosphates other than ATP. The ATP gamma phosphate is transferred to the NDP beta phosphate via a ping-pong mechanism, using a phosphorylated active-site intermediate. Its function is as follows. (Microbial infection) Catalyzes the phosphorylation of dZDP to dZTP, when the bacterium is infected by a phage that produces the substrate for the synthesis of dZTP (2- amino-2'-deoxyadenosine 5'-triphosphate), which is then used by the phage as a DNA polymerase substrate. In Synechococcus sp. (strain CC9605), this protein is Nucleoside diphosphate kinase.